We begin with the raw amino-acid sequence, 246 residues long: TLC domain-containing protein 2 (246 aa).

Helical transmembrane passes span 5-25, 43-63, 79-99, 107-127, 128-148, and 199-219; these read SVIL…YGLG, ISTS…CFCM, SHAL…DMVI, WELL…VLTC, RYVG…FLHL, and FSYT…IVLF. The region spanning 35-231 is the TLC domain; it reads RNAWKWNNIS…LMRSDFMKAS (197 aa).

It belongs to the TLCD family.

The protein localises to the cell membrane. In terms of biological role, regulates the composition and fluidity of the plasma membrane. Inhibits the incorporation of membrane-fluidizing phospholipids containing omega-3 long-chain polyunsaturated fatty acids (LCPUFA) and thereby promotes membrane rigidity. Does not appear to have any effect on LCPUFA synthesis. The chain is TLC domain-containing protein 2 (tlcd2) from Danio rerio (Zebrafish).